A 492-amino-acid chain; its full sequence is Spore germination protein XA (492 aa).

Transmembrane regions (helical) follow at residues 246 to 266 (FILLVDGSPTATIAPVSFPFF), 285 to 305 (LLSLFGIAISIFLPGFWVALV), 325 to 345 (EGIPFPAPLEGMIMITLFELL), 353 to 373 (PAAFGQTLSVVGGLIIGQAAI), 377 to 397 (FVSPSMVVMIAISVVSTFTLV), 413 to 433 (FLMSSFLGIVGFICSILLIVI), and 442 to 462 (GLPFLAPYSPPVFSSMLPSTF).

The protein belongs to the GerABKA family.

The protein resides in the cell membrane. Its function is as follows. May allow B.anthracis to germinate within phagocytic cells and therefore involved in virulence. This chain is Spore germination protein XA (gerXA), found in Bacillus anthracis.